The sequence spans 682 residues: ATP-dependent zinc metalloprotease FtsH (682 aa).

At 1-7 (MKQSHKT) the chain is on the cytoplasmic side. The chain crosses the membrane as a helical span at residues 8–28 (ILLWALLIFLFVMIYNLISDG). Residues 29–138 (TSGEETLDTT…YEVKAKEEST (110 aa)) lie on the Periplasmic side of the membrane. Residues 139-159 (FWQSLLISWLPMLLLFALFFF) form a helical membrane-spanning segment. At 160 to 682 (FMRQLQAGGG…SGTDPEPEPA (523 aa)) the chain is on the cytoplasmic side. Position 232 to 239 (232 to 239 (GPPGTGKT)) interacts with ATP. Position 454 (His454) interacts with Zn(2+). Glu455 is an active-site residue. Zn(2+)-binding residues include His458 and Asp531. Residues 638–682 (LSRPAVVSKPSADAESSVDEDEREARPALFPPLGKSGTDPEPEPA) form a disordered region.

The protein in the central section; belongs to the AAA ATPase family. This sequence in the C-terminal section; belongs to the peptidase M41 family. As to quaternary structure, homohexamer. Requires Zn(2+) as cofactor.

The protein localises to the cell inner membrane. In terms of biological role, acts as a processive, ATP-dependent zinc metallopeptidase for both cytoplasmic and membrane proteins. Plays a role in the quality control of integral membrane proteins. This is ATP-dependent zinc metalloprotease FtsH from Haliangium ochraceum (strain DSM 14365 / JCM 11303 / SMP-2).